Here is a 1781-residue protein sequence, read N- to C-terminus: Chitin synthase 7 (1781 aa).

Residues Asn133, Asn534, Asn629, Asn644, Asn655, and Asn660 are each glycosylated (N-linked (GlcNAc...) asparagine). 2 consecutive transmembrane segments (helical) span residues 741–761 (AWVAFVWALTFWIPSPLLKFV) and 777–797 (LVLFFIILLLNGLIIFWIIGF). N-linked (GlcNAc...) asparagine glycans are attached at residues Asn889 and Asn1011. Residues 1048–1068 (LLLAFAIIICIVTAVKFLAAL) form a helical membrane-spanning segment. An N-linked (GlcNAc...) asparagine glycan is attached at Asn1413. The next 3 membrane-spanning stretches (helical) occupy residues 1444–1464 (LTGTIILPSTTVYIGYLIYVL), 1471–1491 (IPYISLAMIGAVYGHQALIFI), and 1499–1519 (IGWMIIYILAFPIYSFILPLY). Asn1526 carries N-linked (GlcNAc...) asparagine glycosylation. The tract at residues 1677–1712 (QANLSPAAGGGHSRSGTALGFSSGSRSPMPDAMRSQ) is disordered. Polar residues predominate over residues 1690–1702 (RSGTALGFSSGSR). In terms of domain architecture, DEK-C spans 1723 to 1779 (GPTDMAIVESIRSVLCEVDLDTVTKKQVRALVEQRLQTELVGERRTFMDRQIDHELE).

The protein belongs to the chitin synthase family. Class V subfamily.

The protein localises to the cell membrane. The enzyme catalyses [(1-&gt;4)-N-acetyl-beta-D-glucosaminyl](n) + UDP-N-acetyl-alpha-D-glucosamine = [(1-&gt;4)-N-acetyl-beta-D-glucosaminyl](n+1) + UDP + H(+). Functionally, polymerizes chitin, a structural polymer of the cell wall and septum, by transferring the sugar moiety of UDP-GlcNAc to the non-reducing end of the growing chitin polymer. Shows additive effects in septum formation with CHS1, CHS2, CHS3A, CHS4, CHS5 and CHS6. Indispensable for perithecia formation and regulates conidiation. Plays an important role in the response to cell wall stress. Also required for hyphal growth and pathogenicity. The chain is Chitin synthase 7 from Gibberella zeae (strain ATCC MYA-4620 / CBS 123657 / FGSC 9075 / NRRL 31084 / PH-1) (Wheat head blight fungus).